We begin with the raw amino-acid sequence, 159 residues long: Ribonuclease H (159 aa).

An RNase H type-1 domain is found at 1–142 (MHKQVEIFTD…CDELAKAAAQ (142 aa)). Residues Asp-10, Glu-48, Asp-70, and Asp-134 each coordinate Mg(2+). Positions 135 to 159 (ELAKAAAQSPTKEDTGYLESQQDKT) are disordered. Positions 145–159 (TKEDTGYLESQQDKT) are enriched in basic and acidic residues.

This sequence belongs to the RNase H family. Monomer. Mg(2+) is required as a cofactor.

It localises to the cytoplasm. The enzyme catalyses Endonucleolytic cleavage to 5'-phosphomonoester.. Functionally, endonuclease that specifically degrades the RNA of RNA-DNA hybrids. The sequence is that of Ribonuclease H from Proteus mirabilis (strain HI4320).